Consider the following 249-residue polypeptide: 23S rRNA (guanosine-2'-O-)-methyltransferase RlmB (249 aa).

Positions 200, 220, and 229 each coordinate S-adenosyl-L-methionine.

It belongs to the class IV-like SAM-binding methyltransferase superfamily. RNA methyltransferase TrmH family. RlmB subfamily.

It is found in the cytoplasm. It catalyses the reaction guanosine(2251) in 23S rRNA + S-adenosyl-L-methionine = 2'-O-methylguanosine(2251) in 23S rRNA + S-adenosyl-L-homocysteine + H(+). Specifically methylates the ribose of guanosine 2251 in 23S rRNA. This is 23S rRNA (guanosine-2'-O-)-methyltransferase RlmB from Xanthomonas campestris pv. campestris (strain ATCC 33913 / DSM 3586 / NCPPB 528 / LMG 568 / P 25).